We begin with the raw amino-acid sequence, 552 residues long: Putative transport protein Spro_0050 (552 aa).

Helical transmembrane passes span 4–24 (IALT…MGNW), 26–46 (IYGV…VGHF), 65–85 (FGLI…FFSS), 96–116 (FAIL…KLFA), 117–137 (VPLP…PALG), and 158–178 (MGYA…MWLI). RCK C-terminal domains follow at residues 192–276 (AFAS…VIGE) and 279–361 (DVSL…IVGN). A run of 6 helical transmembrane segments spans residues 371 to 391 (MLPV…PLFI), 393 to 413 (GFPA…ALIL), 439 to 459 (IVLF…DTLI), 464 to 484 (LAWI…VGVL), 493 to 513 (YLTL…LAFA), and 530 to 550 (VYPL…VLFW).

It belongs to the AAE transporter (TC 2.A.81) family. YidE subfamily.

It localises to the cell membrane. This is Putative transport protein Spro_0050 from Serratia proteamaculans (strain 568).